A 136-amino-acid polypeptide reads, in one-letter code: MTSLSRPCVEFISTILQTVLNLGLLCLGLILVVFLGKETVHLADVLFAPEQTSKYELVEGLVVYFLYFEFIALIVKYFQSGFHFPLRYFVYIGITAIVRLIIVDHKSPLDVLIYSAAILLLVITLWLCNSKRLKRE.

4 consecutive transmembrane segments (helical) span residues 15–35 (ILQTVLNLGLLCLGLILVVFL), 55–75 (YELVEGLVVYFLYFEFIALIV), 82–102 (FHFPLRYFVYIGITAIVRLII), and 108–128 (PLDVLIYSAAILLLVITLWLC).

The protein belongs to the PsiE family.

The protein resides in the cell inner membrane. This Escherichia coli O17:K52:H18 (strain UMN026 / ExPEC) protein is Protein PsiE.